Here is a 381-residue protein sequence, read N- to C-terminus: Probable serine/threonine-protein kinase PBL25 (381 aa).

Cys-3 carries S-palmitoyl cysteine lipidation. Positions 16 to 41 (GSSMPAPYKQPNSPKRTTGEVVAKNA) are disordered. Thr-54 carries the post-translational modification Phosphothreonine. Residues 65-342 (FRQECLIGEG…SDVITALSFL (278 aa)) form the Protein kinase domain. ATP contacts are provided by residues 71-79 (IGEGGFGRV) and Lys-94. Tyr-139 is subject to Phosphotyrosine. Asp-192 functions as the Proton acceptor in the catalytic mechanism. Residues Ser-196 and Ser-226 each carry the phosphoserine modification. Position 232 is a phosphothreonine (Thr-232). A Phosphotyrosine modification is found at Tyr-240. A disordered region spans residues 347-381 (NSSNTGSNHLQQNRSNKYQDAVQWDSSPRYANSQM). Residues 355 to 381 (HLQQNRSNKYQDAVQWDSSPRYANSQM) show a composition bias toward polar residues.

The protein belongs to the protein kinase superfamily. Ser/Thr protein kinase family.

Its subcellular location is the cell membrane. It catalyses the reaction L-seryl-[protein] + ATP = O-phospho-L-seryl-[protein] + ADP + H(+). The enzyme catalyses L-threonyl-[protein] + ATP = O-phospho-L-threonyl-[protein] + ADP + H(+). In terms of biological role, may be involved in plant defense signaling. In Arabidopsis thaliana (Mouse-ear cress), this protein is Probable serine/threonine-protein kinase PBL25.